The following is a 434-amino-acid chain: ATP-dependent protease ATPase subunit HslU (434 aa).

ATP contacts are provided by residues I18, 60–65, D247, E312, and R384; that span reads GVGKTE.

This sequence belongs to the ClpX chaperone family. HslU subfamily. A double ring-shaped homohexamer of HslV is capped on each side by a ring-shaped HslU homohexamer. The assembly of the HslU/HslV complex is dependent on binding of ATP.

It is found in the cytoplasm. Functionally, ATPase subunit of a proteasome-like degradation complex; this subunit has chaperone activity. The binding of ATP and its subsequent hydrolysis by HslU are essential for unfolding of protein substrates subsequently hydrolyzed by HslV. HslU recognizes the N-terminal part of its protein substrates and unfolds these before they are guided to HslV for hydrolysis. The sequence is that of ATP-dependent protease ATPase subunit HslU from Brucella melitensis biotype 1 (strain ATCC 23456 / CCUG 17765 / NCTC 10094 / 16M).